Reading from the N-terminus, the 348-residue chain is Rhodopsin (348 aa).

Residues 1 to 33 (TEGPYFYVPMVNTTGIVRSPYEYPQYYLVNPAA) are Extracellular-facing. N12 carries N-linked (GlcNAc...) asparagine glycosylation. Residues 34–58 (YAVLGAYMFFLIILGFPINFLTLYV) traverse the membrane as a helical segment. The Cytoplasmic segment spans residues 59-70 (TLEHKKLRTPLN). A helical membrane pass occupies residues 71 to 93 (YILLNLAVADLFMVIGGFTTTMY). The Extracellular segment spans residues 94–107 (SSMHGYFVLGRLGC). C107 and C184 are disulfide-bonded. A helical membrane pass occupies residues 108–130 (NLEGFSATLGGMISLWSLAVLAI). The 'Ionic lock' involved in activated form stabilization signature appears at 131–133 (ERW). Residues 131-149 (ERWVVVCKPISNFRFGENH) are Cytoplasmic-facing. A helical membrane pass occupies residues 150-170 (AIMGVSLTWTMALACTVPPLV). Residues 171–199 (GWSRYIPEGMQCSCGIDYYTRAEGFNNES) are Extracellular-facing. N197 is a glycosylation site (N-linked (GlcNAc...) asparagine). A helical membrane pass occupies residues 200–221 (FVLYMFFCHFMVPLIIIFFCYG). Residues 222–249 (RLLCAVKEAAAAQQESETTQRAEREVTR) lie on the Cytoplasmic side of the membrane. A helical transmembrane segment spans residues 250–271 (MVILMVIGYLVCWLPYASVAWF). Over 272–283 (IFTHQGSEFGPL) the chain is Extracellular. The chain crosses the membrane as a helical span at residues 284 to 305 (FMTIPAFFAKSSSIYNPVIYIC). K293 carries the post-translational modification N6-(retinylidene)lysine. The Cytoplasmic portion of the chain corresponds to 306-348 (MNKQFRNCMITTLFCGKNPFEGEEEGASSTKTEASSASSVSPA). Residue C320 is the site of S-palmitoyl cysteine attachment. The disordered stretch occupies residues 327–348 (GEEEGASSTKTEASSASSVSPA). The segment covering 332–348 (ASSTKTEASSASSVSPA) has biased composition (low complexity).

Belongs to the G-protein coupled receptor 1 family. Opsin subfamily. In terms of processing, phosphorylated on some or all of the serine and threonine residues present in the C-terminal region. Post-translationally, contains one covalently linked retinal chromophore.

It localises to the membrane. It is found in the cell projection. The protein localises to the cilium. Its subcellular location is the photoreceptor outer segment. In terms of biological role, photoreceptor required for image-forming vision at low light intensity. While most salt water fish species use retinal as chromophore, most freshwater fish use 3-dehydroretinal, or a mixture of retinal and 3-dehydroretinal. Light-induced isomerization of 11-cis to all-trans retinal triggers a conformational change that activates signaling via G-proteins. Subsequent receptor phosphorylation mediates displacement of the bound G-protein alpha subunit by arrestin and terminates signaling. This chain is Rhodopsin (rho), found in Neoniphon argenteus (Clearfin squirrelfish).